The primary structure comprises 905 residues: Alanine--tRNA ligase (905 aa).

H595, H599, C696, and H700 together coordinate Zn(2+).

The protein belongs to the class-II aminoacyl-tRNA synthetase family. Zn(2+) serves as cofactor.

It is found in the cytoplasm. It catalyses the reaction tRNA(Ala) + L-alanine + ATP = L-alanyl-tRNA(Ala) + AMP + diphosphate. In terms of biological role, catalyzes the attachment of alanine to tRNA(Ala) in a two-step reaction: alanine is first activated by ATP to form Ala-AMP and then transferred to the acceptor end of tRNA(Ala). Also edits incorrectly charged Ser-tRNA(Ala) and Gly-tRNA(Ala) via its editing domain. This Anaeromyxobacter dehalogenans (strain 2CP-C) protein is Alanine--tRNA ligase.